Reading from the N-terminus, the 426-residue chain is Chromatin structure-remodeling complex subunit SFH1 (426 aa).

S78 bears the Phosphoserine mark. The interaction with STH1 stretch occupies residues 201-242; that stretch reads AIMIPITLDIEHMGHTIKDQFLWNYNDDSISPEEFASIYCKD.

This sequence belongs to the SNF5 family. As to quaternary structure, interacts directly with STH1. Component of the two forms of the RSC complex composed of at least either RSC1 or RSC2, and ARP7, ARP9, LDB7, NPL6, RSC3, RSC30, RSC4, RSC58, RSC6, RSC8, RSC9, SFH1, STH1, HTL1 and probably RTT102. The complexes interact with histone and histone variant components of centromeric chromatin. Phosphorylated in the G1 phase.

It localises to the nucleus. Component of the chromatin structure-remodeling complex (RSC), which is involved in transcription regulation and nucleosome positioning. RSC is responsible for the transfer of a histone octamer from a nucleosome core particle to naked DNA. The reaction requires ATP and involves an activated RSC-nucleosome intermediate. Remodeling reaction also involves DNA translocation, DNA twist and conformational change. As a reconfigurer of centromeric and flanking nucleosomes, RSC complex is required both for proper kinetochore function in chromosome segregation and, via a PKC1-dependent signaling pathway, for organization of the cellular cytoskeleton. This subunit is essential for mitotic growth and required for cell cycle progression. The polypeptide is Chromatin structure-remodeling complex subunit SFH1 (SFH1) (Saccharomyces cerevisiae (strain ATCC 204508 / S288c) (Baker's yeast)).